The following is a 508-amino-acid chain: Strychnine-11-hydroxylase (508 aa).

A helical transmembrane segment spans residues 5–25 (MSFLLLFSLCFLIHCFVFLLI). Residue cysteine 445 coordinates heme.

It belongs to the cytochrome P450 family. It depends on heme as a cofactor.

The protein localises to the membrane. It catalyses the reaction beta-colubrine + reduced [NADPH--hemoprotein reductase] + O2 = 11-demethylbrucine + oxidized [NADPH--hemoprotein reductase] + H2O + H(+). It participates in alkaloid biosynthesis. In terms of biological role, monooxygenase involved in the biosynthesis of curare monoterpene indole alkaloids (MIAs), natural products such as strychnine, a neurotoxic compound used as a pesticide to control rodents, and its pharmacologically active derivatives, including brucine, used to regulate blood pressure. Curare alkaloids act as animal glycine receptor antagonists. Catalyzes the conversion of beta-colubrine to 11-deMe brucine. The sequence is that of Strychnine-11-hydroxylase from Strychnos nux-vomica (Poison nut).